Here is a 547-residue protein sequence, read N- to C-terminus: ATP synthase subunit alpha (547 aa).

Residue 172 to 179 (GDRKTGKT) coordinates ATP.

The protein belongs to the ATPase alpha/beta chains family. F-type ATPases have 2 components, CF(1) - the catalytic core - and CF(0) - the membrane proton channel. CF(1) has five subunits: alpha(3), beta(3), gamma(1), delta(1), epsilon(1). CF(0) has three main subunits: a(1), b(2) and c(9-12). The alpha and beta chains form an alternating ring which encloses part of the gamma chain. CF(1) is attached to CF(0) by a central stalk formed by the gamma and epsilon chains, while a peripheral stalk is formed by the delta and b chains.

The protein resides in the cell membrane. It carries out the reaction ATP + H2O + 4 H(+)(in) = ADP + phosphate + 5 H(+)(out). In terms of biological role, produces ATP from ADP in the presence of a proton gradient across the membrane. The alpha chain is a regulatory subunit. In Rhodococcus erythropolis (strain PR4 / NBRC 100887), this protein is ATP synthase subunit alpha.